Here is a 292-residue protein sequence, read N- to C-terminus: MNFQEMILALQKYWSKQGCIMMQPYDIEKGAGTMNPNTFLRSLGPEPWQVCYVEPSRRPADGRYGENPNRLYQHHQFQVILKPSPDNIQELYLESLKEIGIDPSEHDIRFVEDNWEAATVGAWGLGWEVWLDGMEITQFTYFQQVGNIECELETGEITYGLERLAMYIQEVDSVYDLKWNDKITYGEVFNKAEYENSMYAFELCDADMLFNLFDIYEKEALRLMENGLVIPSYDYVLKCSHAFNTLDARGAIGVSQRASFIGRVRNMAKTVAETFVKQREEMGFPLLKDGDK.

It belongs to the class-II aminoacyl-tRNA synthetase family. As to quaternary structure, tetramer of two alpha and two beta subunits.

It localises to the cytoplasm. The catalysed reaction is tRNA(Gly) + glycine + ATP = glycyl-tRNA(Gly) + AMP + diphosphate. This is Glycine--tRNA ligase alpha subunit from Clostridioides difficile (strain 630) (Peptoclostridium difficile).